A 375-amino-acid chain; its full sequence is Succinyl-diaminopimelate desuccinylase (375 aa).

H66 contributes to the Zn(2+) binding site. Residue D68 is part of the active site. D99 contacts Zn(2+). Catalysis depends on E133, which acts as the Proton acceptor. 3 residues coordinate Zn(2+): E134, E162, and H348.

Belongs to the peptidase M20A family. DapE subfamily. Homodimer. It depends on Zn(2+) as a cofactor. Co(2+) serves as cofactor.

It catalyses the reaction N-succinyl-(2S,6S)-2,6-diaminopimelate + H2O = (2S,6S)-2,6-diaminopimelate + succinate. It functions in the pathway amino-acid biosynthesis; L-lysine biosynthesis via DAP pathway; LL-2,6-diaminopimelate from (S)-tetrahydrodipicolinate (succinylase route): step 3/3. In terms of biological role, catalyzes the hydrolysis of N-succinyl-L,L-diaminopimelic acid (SDAP), forming succinate and LL-2,6-diaminopimelate (DAP), an intermediate involved in the bacterial biosynthesis of lysine and meso-diaminopimelic acid, an essential component of bacterial cell walls. In Shigella boydii serotype 18 (strain CDC 3083-94 / BS512), this protein is Succinyl-diaminopimelate desuccinylase.